The following is a 197-amino-acid chain: Probable GTP-binding protein EngB (197 aa).

Residues 24–197 (DIPEIALAGR…WDAILEKVNK (174 aa)) enclose the EngB-type G domain. GTP contacts are provided by residues 32 to 39 (GRSNVGKS), 59 to 63 (GKTQL), 77 to 80 (DVPG), 144 to 147 (TKAD), and 176 to 178 (FSS). 2 residues coordinate Mg(2+): serine 39 and threonine 61.

Belongs to the TRAFAC class TrmE-Era-EngA-EngB-Septin-like GTPase superfamily. EngB GTPase family. Mg(2+) is required as a cofactor.

Functionally, necessary for normal cell division and for the maintenance of normal septation. In Streptococcus gordonii (strain Challis / ATCC 35105 / BCRC 15272 / CH1 / DL1 / V288), this protein is Probable GTP-binding protein EngB.